Reading from the N-terminus, the 260-residue chain is Ribonuclease HII (260 aa).

An RNase H type-2 domain is found at 71 to 259 (ELVAGVDEVG…VHDAIVNKKN (189 aa)). 3 residues coordinate a divalent metal cation: D77, E78, and D169.

This sequence belongs to the RNase HII family. Mn(2+) is required as a cofactor. Requires Mg(2+) as cofactor.

It localises to the cytoplasm. The catalysed reaction is Endonucleolytic cleavage to 5'-phosphomonoester.. In terms of biological role, endonuclease that specifically degrades the RNA of RNA-DNA hybrids. In Leuconostoc citreum (strain KM20), this protein is Ribonuclease HII.